The following is a 226-amino-acid chain: Eukaryotic translation initiation factor 3 subunit K (226 aa).

The region spanning 42–200 (YNLDANLSLL…QLIVLPRNEF (159 aa)) is the PCI domain.

Belongs to the eIF-3 subunit K family. Component of the eukaryotic translation initiation factor 3 (eIF-3) complex.

It localises to the cytoplasm. Functionally, component of the eukaryotic translation initiation factor 3 (eIF-3) complex, which is involved in protein synthesis of a specialized repertoire of mRNAs and, together with other initiation factors, stimulates binding of mRNA and methionyl-tRNAi to the 40S ribosome. The eIF-3 complex specifically targets and initiates translation of a subset of mRNAs involved in cell proliferation. The protein is Eukaryotic translation initiation factor 3 subunit K (TIF3K1) of Oryza sativa subsp. japonica (Rice).